The chain runs to 377 residues: Serine protease grass (377 aa).

The N-terminal stretch at 1 to 26 is a signal peptide; that stretch reads MMIASSLAVLYGIAIVSSMGVQSARA. Residues 31–89 form the Clip domain; sequence DCTTPDGDQGQCMPFSSCRTIEERLTEAQKAGQKVPADYASYLQKALCGEFNGVRHFCC. Intrachain disulfides connect Cys-32–Cys-88, Cys-42–Cys-78, Cys-48–Cys-89, Cys-111–Cys-243, Cys-148–Cys-164, and Cys-188–Cys-197. The linker stretch occupies residues 91–118; the sequence is SANIQHNSKVMSLFKDENFDCGNFLSQR. The region spanning 119 to 373 is the Peptidase S1 domain; that stretch reads VSNGYEVKLS…YVQWITDTMA (255 aa). The active-site Charge relay system is the His-163. The Ca(2+) site is built by Glu-179, Arg-181, Thr-184, and Asp-187. Asp-223 functions as the Charge relay system in the catalytic mechanism. Residues Asn-230 and Asn-270 are each glycosylated (N-linked (GlcNAc...) asparagine). 2 cysteine pairs are disulfide-bonded: Cys-290-Cys-304 and Cys-314-Cys-349. Ser-318 (charge relay system) is an active-site residue.

This sequence belongs to the peptidase S1 family. CLIP subfamily. Proteolytically cleaved by a tryspin-like protease which is likely to activate grass.

It localises to the secreted. Functionally, endopeptidase. Plays a key role in innate immunity by activating the Toll pathway in response to fungal and Gram-positive bacterial infections, presumably downstream of pattern-recognition receptors (PRR), such as PGRP-SA, GNBP1 and GNBP3, and upstream of spz processing enzyme SPE. The chain is Serine protease grass from Drosophila melanogaster (Fruit fly).